Consider the following 151-residue polypeptide: 3-hydroxyacyl-[acyl-carrier-protein] dehydratase FabZ (151 aa).

H54 is an active-site residue.

It belongs to the thioester dehydratase family. FabZ subfamily.

It localises to the cytoplasm. It carries out the reaction a (3R)-hydroxyacyl-[ACP] = a (2E)-enoyl-[ACP] + H2O. Involved in unsaturated fatty acids biosynthesis. Catalyzes the dehydration of short chain beta-hydroxyacyl-ACPs and long chain saturated and unsaturated beta-hydroxyacyl-ACPs. The polypeptide is 3-hydroxyacyl-[acyl-carrier-protein] dehydratase FabZ (Buchnera aphidicola subsp. Acyrthosiphon pisum (strain 5A)).